A 1124-amino-acid chain; its full sequence is tRNA (34-2'-O)-methyltransferase regulator WDR6 (1124 aa).

Met1 bears the N-acetylmethionine mark. WD repeat units follow at residues 53–97 (MKRV…IVKI), 105–143 (RELWRSGLWNMSDWIWDARWLEGNIALALGHNSVVLYDP), 147–189 (CSLQ…VWYP), 200–238 (VPDRRVSGHVGVIFSMSYLESKGLLATASEDRSVRIWKV), 247–285 (RVQNIGHCFGHSARVWQVKLLENYLISAGEDCVCLVWSH), 289–327 (ILQAFRGHQGRGIRALAAHERQAWVITGGDDSGIRLWHL), 335–376 (SGVF…LYDL), 381–422 (WEQL…VVPI), 425–470 (PTAA…ISAA), 476–520 (IFVK…LYPS), 557–596 (PMSTLPSLHGKQGVTSVTCHGGYVYTTGRDGSYYQLFVRG), 602–640 (VLRQKPCRGMNWVAGVRMVADGNMVILGFHANEFVVWSP), 643–682 (HEKLHIINCGGGHRSWAFSDTEAAMAFAYLKDGDVMLYRA), 743–789 (LIDI…VWGV), 852–897 (RHRH…LFLL), 905–950 (QLLA…FWDL), 974–1015 (GSPC…VFVL), 1039–1076 (EEYSVPCAHAAHVTGLKILSRSLMVSASIDQRLTFWRL), and 1082–1124 (TFMN…NWYD).

This sequence belongs to the WD repeat WDR6 family. In terms of assembly, interacts with FTSJ1; the interaction is direct, and required for 2'-O-methylation of position 34 in substrate tRNAs. Interacts with IRS4. Interacts with STK11/LKB1.

It is found in the cytoplasm. In terms of biological role, together with methyltransferase FTSJ1, methylates the 2'-O-ribose of nucleotides at position 34 of the tRNA anticodon loop of substrate tRNAs. Required for the correct positioning of the substrate tRNA for methylation. Required to suppress amino acid starvation-induced autophagy. Enhances the STK11/LKB1-induced cell growth suppression activity. The protein is tRNA (34-2'-O)-methyltransferase regulator WDR6 (WDR6) of Bos taurus (Bovine).